The primary structure comprises 83 residues: Beta-toxin Ct25 (83 aa).

The first 18 residues, methionine 1–cysteine 18, serve as a signal peptide directing secretion. The LCN-type CS-alpha/beta domain maps to lysine 19–glycine 81. 4 cysteine pairs are disulfide-bonded: cysteine 29–cysteine 80, cysteine 33–cysteine 54, cysteine 40–cysteine 61, and cysteine 44–cysteine 63. Glycine 81 is subject to Glycine amide.

Belongs to the long (4 C-C) scorpion toxin superfamily. Sodium channel inhibitor family. Beta subfamily. As to expression, expressed by the venom gland.

The protein resides in the secreted. Functionally, beta toxins bind voltage-independently at site-4 of sodium channels (Nav) and shift the voltage of activation toward more negative potentials thereby affecting sodium channel activation and promoting spontaneous and repetitive firing. The sequence is that of Beta-toxin Ct25 from Centruroides tecomanus (Scorpion).